A 115-amino-acid polypeptide reads, in one-letter code: MEARAQARYIRVTPMKARRVVDLIRGMDATEAQAVLRFAPQAASVPVGKVLDSAIANAAHNYDHTDADSLFISEAYVDEGPTLKRFRPRAQGRAYRIRKRTSHITVVVSSKEGTR.

It belongs to the universal ribosomal protein uL22 family. In terms of assembly, part of the 50S ribosomal subunit.

Its function is as follows. This protein binds specifically to 23S rRNA; its binding is stimulated by other ribosomal proteins, e.g. L4, L17, and L20. It is important during the early stages of 50S assembly. It makes multiple contacts with different domains of the 23S rRNA in the assembled 50S subunit and ribosome. Functionally, the globular domain of the protein is located near the polypeptide exit tunnel on the outside of the subunit, while an extended beta-hairpin is found that lines the wall of the exit tunnel in the center of the 70S ribosome. In Streptomyces avermitilis (strain ATCC 31267 / DSM 46492 / JCM 5070 / NBRC 14893 / NCIMB 12804 / NRRL 8165 / MA-4680), this protein is Large ribosomal subunit protein uL22.